We begin with the raw amino-acid sequence, 105 residues long: Phosphoribosyl-ATP pyrophosphatase (105 aa).

Belongs to the PRA-PH family.

The protein localises to the cytoplasm. The catalysed reaction is 1-(5-phospho-beta-D-ribosyl)-ATP + H2O = 1-(5-phospho-beta-D-ribosyl)-5'-AMP + diphosphate + H(+). It participates in amino-acid biosynthesis; L-histidine biosynthesis; L-histidine from 5-phospho-alpha-D-ribose 1-diphosphate: step 2/9. The chain is Phosphoribosyl-ATP pyrophosphatase from Ruthia magnifica subsp. Calyptogena magnifica.